The primary structure comprises 65 residues: Large ribosomal subunit protein bL35 (65 aa).

2 stretches are compositionally biased toward basic residues: residues 1–16 and 31–45; these read MPKM…RFKK and HRFH…RQLR. The segment at 1–47 is disordered; sequence MPKMKTHRASAKRFKKTANGGLKSASAYTSHRFHGKTKKQRRQLRGT.

The protein belongs to the bacterial ribosomal protein bL35 family.

This Leuconostoc citreum (strain KM20) protein is Large ribosomal subunit protein bL35.